The chain runs to 327 residues: Small ribosomal subunit protein RACK1z (327 aa).

7 WD repeats span residues 13–44 (AHTD…ILWK), 61–91 (GHSH…RLWD), 103–133 (GHTK…KLWN), 148–180 (GHRD…KVWN), 192–222 (GHTG…LLWD), 233–262 (EANS…KIWD), and 293–323 (RKVI…RVWG).

The protein belongs to the WD repeat G protein beta family. Ribosomal protein RACK1 subfamily. As to quaternary structure, homodimer and heterodimer with RACK1B or RACK1C. Interacts with NUDT7. Interacts with GB1, MEKK1, MKK4, MKK5, MPK3 and MPK6, but not with GPA1 or MPK4. Interacts with OFUT20. In terms of tissue distribution, widely expressed.

Its subcellular location is the cytoplasm. The protein localises to the nucleus. In terms of biological role, major component of the RACK1 regulatory proteins that play a role in multiple signal transduction pathways. Involved in multiple hormone responses and developmental processes. MAPK cascade scaffolding protein involved in the protease IV and ArgC signaling pathway but not the flg22 pathway. The chain is Small ribosomal subunit protein RACK1z from Arabidopsis thaliana (Mouse-ear cress).